Consider the following 231-residue polypeptide: Ion-translocating oxidoreductase complex subunit E (231 aa).

6 consecutive transmembrane segments (helical) span residues 18–38 (GLVQ…VTNA), 39–59 (LGLG…VSLV), 69–89 (IPVF…LINA), 93–113 (GLYL…VIIG), 128–148 (AFDG…LGAG), and 182–202 (PFLL…LIAG).

This sequence belongs to the NqrDE/RnfAE family. In terms of assembly, the complex is composed of six subunits: RnfA, RnfB, RnfC, RnfD, RnfE and RnfG.

Its subcellular location is the cell inner membrane. Its function is as follows. Part of a membrane-bound complex that couples electron transfer with translocation of ions across the membrane. The polypeptide is Ion-translocating oxidoreductase complex subunit E (Shewanella denitrificans (strain OS217 / ATCC BAA-1090 / DSM 15013)).